A 436-amino-acid chain; its full sequence is 3-ketoacyl-CoA thiolase (436 aa).

Catalysis depends on Cys99, which acts as the Acyl-thioester intermediate. Residues His392 and Cys422 each act as proton acceptor in the active site.

It belongs to the thiolase-like superfamily. Thiolase family. As to quaternary structure, heterotetramer of two alpha chains (FadJ) and two beta chains (FadI).

It is found in the cytoplasm. It carries out the reaction an acyl-CoA + acetyl-CoA = a 3-oxoacyl-CoA + CoA. Its pathway is lipid metabolism; fatty acid beta-oxidation. Functionally, catalyzes the final step of fatty acid oxidation in which acetyl-CoA is released and the CoA ester of a fatty acid two carbons shorter is formed. In Shewanella baltica (strain OS155 / ATCC BAA-1091), this protein is 3-ketoacyl-CoA thiolase.